Here is a 1047-residue protein sequence, read N- to C-terminus: Isoleucine--tRNA ligase (1047 aa).

The 'HIGH' region motif lies at proline 52–histidine 62. The short motif at lysine 600–histidine 604 is the 'KMSKS' region element. An ATP-binding site is contributed by lysine 603.

This sequence belongs to the class-I aminoacyl-tRNA synthetase family. IleS type 2 subfamily. In terms of assembly, monomer. Zn(2+) is required as a cofactor.

Its subcellular location is the cytoplasm. The enzyme catalyses tRNA(Ile) + L-isoleucine + ATP = L-isoleucyl-tRNA(Ile) + AMP + diphosphate. Catalyzes the attachment of isoleucine to tRNA(Ile). As IleRS can inadvertently accommodate and process structurally similar amino acids such as valine, to avoid such errors it has two additional distinct tRNA(Ile)-dependent editing activities. One activity is designated as 'pretransfer' editing and involves the hydrolysis of activated Val-AMP. The other activity is designated 'posttransfer' editing and involves deacylation of mischarged Val-tRNA(Ile). This chain is Isoleucine--tRNA ligase, found in Streptomyces avermitilis (strain ATCC 31267 / DSM 46492 / JCM 5070 / NBRC 14893 / NCIMB 12804 / NRRL 8165 / MA-4680).